The chain runs to 1104 residues: Ankyrin repeat- and BTB/POZ domain-containing protein 3 (1104 aa).

A helical transmembrane segment spans residues 168–188 (IVLSWGLAAHCTAAALAALSL). The segment at 260–301 (SCSGPGSGSGSGPGPSSGPGAAPAADKEREAPGGGAASGGAC) is disordered. Positions 264 to 276 (PGSGSGSGPGPSS) are enriched in gly residues. 5 ANK repeats span residues 603–632 (QGMTPLMYACVRGDEAMVQMLLDAGADLNV), 649–678 (RHWTALTFAVLHGHIPVVQLLLDAGAKVEG), 687–716 (YSETPLQLAAAVGNFELVSLLLERGADPLI), 730–759 (GDMNSFSQAAAHGHRNVFRKLLAQPEKEKS), and 825–854 (TWLESLRIAFQQHRRPLIQCLLKEFKTIQE). The BTB domain occupies 923 to 989 (SDVTFLVEGR…LYYGGPESLL (67 aa)).

The protein resides in the membrane. This chain is Ankyrin repeat- and BTB/POZ domain-containing protein 3, found in Homo sapiens (Human).